Reading from the N-terminus, the 498-residue chain is Mitogen-activated protein kinase 15 (498 aa).

In terms of domain architecture, Protein kinase spans 13–304; the sequence is YKIEEVIGKG…AEEALADPYF (292 aa). ATP contacts are provided by residues 19 to 27 and lysine 42; that span reads IGKGSYGVV. Aspartate 139 functions as the Proton acceptor in the catalytic mechanism. A Phosphothreonine modification is found at threonine 175. The TXY signature appears at 175–177; sequence TDY. Tyrosine 177 is modified (phosphotyrosine). Disordered stretches follow at residues 388–411 and 470–498; these read STAA…SDDR and STAE…GSYP. The span at 486-498 shows a compositional bias: polar residues; the sequence is LATNTVSPRGSYP.

Belongs to the protein kinase superfamily. CMGC Ser/Thr protein kinase family. MAP kinase subfamily. In terms of processing, dually phosphorylated on Thr-175 and Tyr-177, which activates the enzyme.

It carries out the reaction L-seryl-[protein] + ATP = O-phospho-L-seryl-[protein] + ADP + H(+). It catalyses the reaction L-threonyl-[protein] + ATP = O-phospho-L-threonyl-[protein] + ADP + H(+). Its activity is regulated as follows. Activated by threonine and tyrosine phosphorylation. In Oryza sativa subsp. japonica (Rice), this protein is Mitogen-activated protein kinase 15 (MPK15).